The following is a 67-amino-acid chain: uncharacterized protein (67 aa).

The next 2 helical transmembrane spans lie at 10-30 and 40-60; these read EFFI…ITMW and LMVG…WMVF.

This sequence belongs to the plectrovirus ORF10 family.

The protein resides in the host membrane. This is an uncharacterized protein from Spiroplasma citri (SpV1).